A 521-amino-acid chain; its full sequence is Glutamate--cysteine ligase (521 aa).

This sequence belongs to the glutamate--cysteine ligase type 1 family. Type 1 subfamily.

It carries out the reaction L-cysteine + L-glutamate + ATP = gamma-L-glutamyl-L-cysteine + ADP + phosphate + H(+). Its pathway is sulfur metabolism; glutathione biosynthesis; glutathione from L-cysteine and L-glutamate: step 1/2. The sequence is that of Glutamate--cysteine ligase from Aliivibrio salmonicida (strain LFI1238) (Vibrio salmonicida (strain LFI1238)).